Reading from the N-terminus, the 129-residue chain is uncharacterized protein (129 aa).

A signal peptide spans 1–21 (MAQNKTIAVALLLATLVAVMG).

This is an uncharacterized protein from Oryza sativa subsp. japonica (Rice).